Here is a 132-residue protein sequence, read N- to C-terminus: Large ribosomal subunit protein uL14 (132 aa).

This sequence belongs to the universal ribosomal protein uL14 family. Part of the 50S ribosomal subunit. Forms a cluster with proteins L3 and L24e, part of which may contact the 16S rRNA in 2 intersubunit bridges.

In terms of biological role, binds to 23S rRNA. Forms part of two intersubunit bridges in the 70S ribosome. In Methanococcus vannielii, this protein is Large ribosomal subunit protein uL14.